The primary structure comprises 139 residues: Small ribosomal subunit protein uS11 (139 aa).

The tract at residues 117 to 139 (VEDVTPIPHDGTRPKGGRRGRRV) is disordered.

It belongs to the universal ribosomal protein uS11 family. As to quaternary structure, part of the 30S ribosomal subunit.

Functionally, located on the platform of the 30S subunit. In Thermococcus onnurineus (strain NA1), this protein is Small ribosomal subunit protein uS11.